The following is a 230-amino-acid chain: Somatolactin (230 aa).

Residues 1–23 form the signal peptide; sequence MIKTKVLQAWMGIWLCAVNGLLG. Intrachain disulfides connect Cys28/Cys38, Cys87/Cys202, and Cys219/Cys227. N-linked (GlcNAc...) asparagine glycosylation is present at Asn177.

The protein belongs to the somatotropin/prolactin family.

It is found in the secreted. The protein is Somatolactin of Ictalurus punctatus (Channel catfish).